The sequence spans 412 residues: 1-deoxy-D-xylulose 5-phosphate reductoisomerase (412 aa).

Thr-10, Gly-11, Ser-12, Ile-13, Gly-36, Lys-37, Asn-38, and Asn-130 together coordinate NADPH. Residue Lys-131 participates in 1-deoxy-D-xylulose 5-phosphate binding. Glu-132 is an NADPH binding site. Asp-156 contributes to the Mn(2+) binding site. Positions 157, 158, 194, and 217 each coordinate 1-deoxy-D-xylulose 5-phosphate. Mn(2+) is bound at residue Glu-158. Residue Gly-223 participates in NADPH binding. Ser-230, Asn-235, Lys-236, and Glu-239 together coordinate 1-deoxy-D-xylulose 5-phosphate. Glu-239 lines the Mn(2+) pocket.

It belongs to the DXR family. Mg(2+) is required as a cofactor. Requires Mn(2+) as cofactor.

The catalysed reaction is 2-C-methyl-D-erythritol 4-phosphate + NADP(+) = 1-deoxy-D-xylulose 5-phosphate + NADPH + H(+). It functions in the pathway isoprenoid biosynthesis; isopentenyl diphosphate biosynthesis via DXP pathway; isopentenyl diphosphate from 1-deoxy-D-xylulose 5-phosphate: step 1/6. Catalyzes the NADPH-dependent rearrangement and reduction of 1-deoxy-D-xylulose-5-phosphate (DXP) to 2-C-methyl-D-erythritol 4-phosphate (MEP). This Prochlorococcus marinus (strain NATL1A) protein is 1-deoxy-D-xylulose 5-phosphate reductoisomerase.